A 540-amino-acid chain; its full sequence is DNA topoisomerase 1 (540 aa).

The 110-residue stretch at 1 to 110 folds into the Toprim domain; the sequence is MELFIVESPT…NIKRAVFYEI (110 aa). Mg(2+) contacts are provided by E7 and D79. Residues 126–536 form the Topo IA-type catalytic domain; sequence NMNLVYAQFA…FMEKIFGKEL (411 aa). An interaction with DNA region spans residues 161 to 166; that stretch reads SAGRVQ. The O-(5'-phospho-DNA)-tyrosine intermediate role is filled by Y281.

It belongs to the type IA topoisomerase family. As to quaternary structure, monomer. The cofactor is Mg(2+).

The catalysed reaction is ATP-independent breakage of single-stranded DNA, followed by passage and rejoining.. Its function is as follows. Releases the supercoiling and torsional tension of DNA, which is introduced during the DNA replication and transcription, by transiently cleaving and rejoining one strand of the DNA duplex. Introduces a single-strand break via transesterification at a target site in duplex DNA. The scissile phosphodiester is attacked by the catalytic tyrosine of the enzyme, resulting in the formation of a DNA-(5'-phosphotyrosyl)-enzyme intermediate and the expulsion of a 3'-OH DNA strand. The free DNA strand then undergoes passage around the unbroken strand, thus removing DNA supercoils. Finally, in the religation step, the DNA 3'-OH attacks the covalent intermediate to expel the active-site tyrosine and restore the DNA phosphodiester backbone. This Aquifex aeolicus (strain VF5) protein is DNA topoisomerase 1.